Reading from the N-terminus, the 1413-residue chain is DNA-directed RNA polymerase subunit beta' (1413 aa).

Zn(2+) contacts are provided by Cys-70, Cys-72, Cys-85, and Cys-88. Residues Asp-460, Asp-462, and Asp-464 each coordinate Mg(2+). Residues Cys-819, Cys-893, Cys-900, and Cys-903 each contribute to the Zn(2+) site.

Belongs to the RNA polymerase beta' chain family. The RNAP catalytic core consists of 2 alpha, 1 beta, 1 beta' and 1 omega subunit. When a sigma factor is associated with the core the holoenzyme is formed, which can initiate transcription. The cofactor is Mg(2+). Requires Zn(2+) as cofactor.

It carries out the reaction RNA(n) + a ribonucleoside 5'-triphosphate = RNA(n+1) + diphosphate. In terms of biological role, DNA-dependent RNA polymerase catalyzes the transcription of DNA into RNA using the four ribonucleoside triphosphates as substrates. In Burkholderia vietnamiensis (strain G4 / LMG 22486) (Burkholderia cepacia (strain R1808)), this protein is DNA-directed RNA polymerase subunit beta'.